An 88-amino-acid chain; its full sequence is Small ribosomal subunit protein uS17 (88 aa).

This sequence belongs to the universal ribosomal protein uS17 family. In terms of assembly, part of the 30S ribosomal subunit.

Functionally, one of the primary rRNA binding proteins, it binds specifically to the 5'-end of 16S ribosomal RNA. The sequence is that of Small ribosomal subunit protein uS17 from Methylorubrum extorquens (strain PA1) (Methylobacterium extorquens).